The following is a 182-amino-acid chain: uncharacterized protein (182 aa).

This sequence to H.pylori HP0274.

This is an uncharacterized protein from Methanocaldococcus jannaschii (strain ATCC 43067 / DSM 2661 / JAL-1 / JCM 10045 / NBRC 100440) (Methanococcus jannaschii).